Here is a 253-residue protein sequence, read N- to C-terminus: MGRVIRAQRKSGGIFQAHTRLRKGAAQLRTLDFAERHGYIRGVVQKIIHDPGRGAPLAKVAFRNPYHYRTDVETFVATEGMYTGQFVYCGKNAALTVGNVLPVGEMPEGTIISNVEEKAGDRGALGRSSGNYVIIVGHDVDTGKTRVKLPSGAKKVVPSSARGVVGIVAGGGRIDKPLLKAGRAFHKYRVKRNCWPRTRGVAMNPVDHPHGGGNHQHVGHSTTVPRQSAPGQKVGLIAARRTGLLRGAAAVEN.

The protein belongs to the universal ribosomal protein uL2 family. As to quaternary structure, component of the large ribosomal subunit (LSU). Mature yeast ribosomes consist of a small (40S) and a large (60S) subunit. The 40S small subunit contains 1 molecule of ribosomal RNA (18S rRNA) and at least 33 different proteins. The large 60S subunit contains 3 rRNA molecules (25S, 5.8S and 5S rRNA) and at least 46 different proteins.

It is found in the cytoplasm. The protein localises to the nucleus. Component of the ribosome, a large ribonucleoprotein complex responsible for the synthesis of proteins in the cell. The small ribosomal subunit (SSU) binds messenger RNAs (mRNAs) and translates the encoded message by selecting cognate aminoacyl-transfer RNA (tRNA) molecules. The large subunit (LSU) contains the ribosomal catalytic site termed the peptidyl transferase center (PTC), which catalyzes the formation of peptide bonds, thereby polymerizing the amino acids delivered by tRNAs into a polypeptide chain. The nascent polypeptides leave the ribosome through a tunnel in the LSU and interact with protein factors that function in enzymatic processing, targeting, and the membrane insertion of nascent chains at the exit of the ribosomal tunnel. This Schizosaccharomyces pombe (strain 972 / ATCC 24843) (Fission yeast) protein is Large ribosomal subunit protein uL2C (rpl803).